We begin with the raw amino-acid sequence, 218 residues long: Octanoyltransferase (218 aa).

In terms of domain architecture, BPL/LPL catalytic spans 31–206 (REAADEVWLV…QLVKHLDYAE (176 aa)). Substrate contacts are provided by residues 70 to 77 (RGGQVTYH), 137 to 139 (SLG), and 150 to 152 (GLA). The active-site Acyl-thioester intermediate is the Cys168.

Belongs to the LipB family.

It is found in the cytoplasm. The catalysed reaction is octanoyl-[ACP] + L-lysyl-[protein] = N(6)-octanoyl-L-lysyl-[protein] + holo-[ACP] + H(+). Its pathway is protein modification; protein lipoylation via endogenous pathway; protein N(6)-(lipoyl)lysine from octanoyl-[acyl-carrier-protein]: step 1/2. Catalyzes the transfer of endogenously produced octanoic acid from octanoyl-acyl-carrier-protein onto the lipoyl domains of lipoate-dependent enzymes. Lipoyl-ACP can also act as a substrate although octanoyl-ACP is likely to be the physiological substrate. The polypeptide is Octanoyltransferase (Pseudomonas savastanoi pv. phaseolicola (strain 1448A / Race 6) (Pseudomonas syringae pv. phaseolicola (strain 1448A / Race 6))).